Consider the following 314-residue polypeptide: tRNA-cytidine(32) 2-sulfurtransferase (314 aa).

Positions 46–51 (SGGKDS) match the PP-loop motif motif. [4Fe-4S] cluster-binding residues include C121, C124, and C212.

It belongs to the TtcA family. Homodimer. Mg(2+) is required as a cofactor. The cofactor is [4Fe-4S] cluster.

Its subcellular location is the cytoplasm. It catalyses the reaction cytidine(32) in tRNA + S-sulfanyl-L-cysteinyl-[cysteine desulfurase] + AH2 + ATP = 2-thiocytidine(32) in tRNA + L-cysteinyl-[cysteine desulfurase] + A + AMP + diphosphate + H(+). Its pathway is tRNA modification. Functionally, catalyzes the ATP-dependent 2-thiolation of cytidine in position 32 of tRNA, to form 2-thiocytidine (s(2)C32). The sulfur atoms are provided by the cysteine/cysteine desulfurase (IscS) system. This Nitrosomonas europaea (strain ATCC 19718 / CIP 103999 / KCTC 2705 / NBRC 14298) protein is tRNA-cytidine(32) 2-sulfurtransferase.